Here is a 276-residue protein sequence, read N- to C-terminus: Hemin import ATP-binding protein HmuV (276 aa).

The ABC transporter domain occupies 2-259; that stretch reads LTAHHLDVAR…AHIAQCYGFA (258 aa). 34-41 contributes to the ATP binding site; sequence GRNGAGKS.

It belongs to the ABC transporter superfamily. Heme (hemin) importer (TC 3.A.1.14.5) family. In terms of assembly, the complex is composed of two ATP-binding proteins (HmuV), two transmembrane proteins (HmuU) and a solute-binding protein (HmuT).

It localises to the cell inner membrane. In terms of biological role, part of the ABC transporter complex HmuTUV involved in hemin import. Responsible for energy coupling to the transport system. This chain is Hemin import ATP-binding protein HmuV, found in Burkholderia cenocepacia (strain HI2424).